The following is a 148-amino-acid chain: Lysozyme C (148 aa).

The signal sequence occupies residues 1–18 (MKAVIILGLVLLSVTVQG). Residues 19-148 (KIFERCELAR…VSQYVQGCGV (130 aa)) form the C-type lysozyme domain. Cystine bridges form between C24/C146, C48/C134, C83/C99, and C95/C113. Active-site residues include E53 and D71.

Belongs to the glycosyl hydrolase 22 family. As to quaternary structure, monomer.

It localises to the secreted. The enzyme catalyses Hydrolysis of (1-&gt;4)-beta-linkages between N-acetylmuramic acid and N-acetyl-D-glucosamine residues in a peptidoglycan and between N-acetyl-D-glucosamine residues in chitodextrins.. Its function is as follows. Lysozymes have primarily a bacteriolytic function; those in tissues and body fluids are associated with the monocyte-macrophage system and enhance the activity of immunoagents. This is Lysozyme C (LYZ) from Miopithecus talapoin (Angolan talapoin).